The chain runs to 66 residues: Large ribosomal subunit protein bL33 (66 aa).

The protein belongs to the bacterial ribosomal protein bL33 family.

This chain is Large ribosomal subunit protein bL33, found in Wolbachia sp. subsp. Brugia malayi (strain TRS).